We begin with the raw amino-acid sequence, 507 residues long: Sensor protein CseC (507 aa).

Positions 1-42 are disordered; it reads MRGFFRQRRSVSPPGHPYDRTGPGEHAGPGARTGPGGRPRVL. The span at 25–37 shows a compositional bias: gly residues; the sequence is EHAGPGARTGPGG. Helical transmembrane passes span 60–80 and 183–203; these read LSAAIALVGALVAIALSLVVH and ALVIGSIAVVLGGSALGVLIG. The 57-residue stretch at 204–260 folds into the HAMP domain; that stretch reads GQLSRRLREAAAAANRVASGEPDVRVRDAIGGVVRDETDDVARAVDAMADALQQRIE. Residues 268 to 470 form the Histidine kinase domain; that stretch reads DIAHELRTPV…VAVLWLPEHA (203 aa). Histidine 271 bears the Phosphohistidine; by autocatalysis mark. Residues 472 to 507 are disordered; that stretch reads TNTGSYPMLPDRSKSGASSSARDMSREASQGMSRKP. The span at 486-507 shows a compositional bias: polar residues; that stretch reads SGASSSARDMSREASQGMSRKP.

The protein localises to the cell membrane. It carries out the reaction ATP + protein L-histidine = ADP + protein N-phospho-L-histidine.. In terms of biological role, member of the two-component regulatory system CseB/CseC involved in the stability of the cell envelope, through activation of transcription of RNA polymerase sigma-E factor. CseC functions as a membrane-associated protein kinase that phosphorylates CseB in response to changes in the cell envelope. In Streptomyces coelicolor (strain ATCC BAA-471 / A3(2) / M145), this protein is Sensor protein CseC (cseC).